Reading from the N-terminus, the 686-residue chain is Aminodeoxychorismate synthase (686 aa).

The 193-residue stretch at 2 to 194 folds into the Glutamine amidotransferase type-1 domain; the sequence is RTLLIDNYDS…RDLALAHHRA (193 aa). C81 serves as the catalytic Nucleophile. Catalysis depends on residues H168 and E170. Positions 233–686 are PABB component; it reads LDSSSVLEGA…LDGSAVAGAR (454 aa).

This sequence in the C-terminal section; belongs to the anthranilate synthase component I family.

It carries out the reaction chorismate + L-glutamine = 4-amino-4-deoxychorismate + L-glutamate. It participates in antibiotic biosynthesis. Its function is as follows. Involved in chloramphenicol biosynthesis. Catalyzes the biosynthesis of 4-amino-4-deoxychorismate (ADC) from chorismate and glutamine. In Streptomyces venezuelae (strain ATCC 10712 / CBS 650.69 / DSM 40230 / JCM 4526 / NBRC 13096 / PD 04745), this protein is Aminodeoxychorismate synthase.